A 537-amino-acid chain; its full sequence is Hexahomomethionine N-hydroxylase (537 aa).

Residues 7–27 (FNTCFQILLGFIVFIASITLL) form a helical membrane-spanning segment.

This sequence belongs to the cytochrome P450 family. It depends on heme as a cofactor. In terms of tissue distribution, highly expressed in hypocotyl and roots. Lower expression in siliques, stems and leaves. Barely detectable in flowers. Expressed only in the vascular bundles in apical plant parts.

It localises to the endoplasmic reticulum membrane. It catalyses the reaction L-hexahomomethionine + 2 reduced [NADPH--hemoprotein reductase] + 2 O2 = (E)-9-(methylsulfanyl)nonanal oxime + 2 oxidized [NADPH--hemoprotein reductase] + CO2 + 3 H2O + 2 H(+). The enzyme catalyses L-pentahomomethionine + 2 reduced [NADPH--hemoprotein reductase] + 2 O2 = (E)-8-(methylsulfanyl)octanal oxime + 2 oxidized [NADPH--hemoprotein reductase] + CO2 + 3 H2O + 2 H(+). The catalysed reaction is an L-polyhomomethionine + 2 reduced [NADPH--hemoprotein reductase] + 2 O2 = an (E)-omega-(methylsulfanyl)-alkanal oxime + 2 oxidized [NADPH--hemoprotein reductase] + CO2 + 3 H2O + 2 H(+). Catalyzes the conversion of the long chain elongated methionines penta- and hexahomomethionine to their corresponding aldoximes 8-methylthiooctanaldoxime and 9-methylthiononanaldoxime. The protein is Hexahomomethionine N-hydroxylase (CYP79F2) of Arabidopsis thaliana (Mouse-ear cress).